Consider the following 527-residue polypeptide: Probable protein kinase UbiB (527 aa).

The 384-residue stretch at 118–501 (DFERVPVASA…QKRTNRLLQG (384 aa)) folds into the Protein kinase domain. ATP is bound by residues 124-132 (VASASIAQV) and Lys150. The active-site Proton acceptor is the Asp285. Residues 502–522 (LLMFGVAVGVGAVLARAWLAI) traverse the membrane as a helical segment.

It belongs to the ABC1 family. UbiB subfamily.

Its subcellular location is the cell inner membrane. The protein operates within cofactor biosynthesis; ubiquinone biosynthesis [regulation]. Is probably a protein kinase regulator of UbiI activity which is involved in aerobic coenzyme Q (ubiquinone) biosynthesis. In Paraburkholderia phymatum (strain DSM 17167 / CIP 108236 / LMG 21445 / STM815) (Burkholderia phymatum), this protein is Probable protein kinase UbiB.